We begin with the raw amino-acid sequence, 434 residues long: Isocitrate lyase (434 aa).

Position 91–93 (91–93 (SGW)) interacts with substrate. D157 is a Mg(2+) binding site. C195 (proton acceptor) is an active-site residue. Substrate contacts are provided by residues 196 to 197 (GH), R232, 317 to 321 (NCSPS), and T351.

It belongs to the isocitrate lyase/PEP mutase superfamily. Isocitrate lyase family. Homotetramer. The cofactor is Mg(2+).

It catalyses the reaction D-threo-isocitrate = glyoxylate + succinate. It participates in carbohydrate metabolism; glyoxylate cycle; (S)-malate from isocitrate: step 1/2. In terms of biological role, involved in the metabolic adaptation in response to environmental changes. Catalyzes the reversible formation of succinate and glyoxylate from isocitrate, a key step of the glyoxylate cycle, which operates as an anaplerotic route for replenishing the tricarboxylic acid cycle during growth on fatty acid substrates. The sequence is that of Isocitrate lyase (aceA) from Salmonella typhimurium (strain LT2 / SGSC1412 / ATCC 700720).